Reading from the N-terminus, the 62-residue chain is MKVNDRVTVKTDGGPRRPGVVLAVEQFSEGVMYLVSLEDYPLGIWFFNEMGHSDGIFVELAE.

This sequence belongs to the DsrB family.

This is Protein DsrB from Enterobacter sp. (strain 638).